Here is a 707-residue protein sequence, read N- to C-terminus: Ribosomal RNA large subunit methyltransferase K/L (707 aa).

The THUMP domain occupies 43-154; the sequence is QIYRCCLWSR…KDKAILGVDM (112 aa).

Belongs to the methyltransferase superfamily. RlmKL family.

It localises to the cytoplasm. The enzyme catalyses guanosine(2445) in 23S rRNA + S-adenosyl-L-methionine = N(2)-methylguanosine(2445) in 23S rRNA + S-adenosyl-L-homocysteine + H(+). The catalysed reaction is guanosine(2069) in 23S rRNA + S-adenosyl-L-methionine = N(2)-methylguanosine(2069) in 23S rRNA + S-adenosyl-L-homocysteine + H(+). Its function is as follows. Specifically methylates the guanine in position 2445 (m2G2445) and the guanine in position 2069 (m7G2069) of 23S rRNA. The polypeptide is Ribosomal RNA large subunit methyltransferase K/L (Vibrio campbellii (strain ATCC BAA-1116)).